A 576-amino-acid chain; its full sequence is RING finger and SPRY domain-containing protein 1 (576 aa).

Residues 1–16 (MIVFGWAVFLASRSLG) form the signal peptide. A Phosphoserine modification is found at Ser-50. A disordered region spans residues 50 to 99 (SGTDDSVDTQQQQAENSAVPTADTRSQPRDPVRPPRRGRGPHEPRRKKQN). A compositionally biased stretch (polar residues) spans 57–68 (DTQQQQAENSAV). Over residues 83–97 (PPRRGRGPHEPRRKK) the composition is skewed to basic residues. Residues 300–483 (LFLKEGRQLT…CEFNFGAKPF (184 aa)) enclose the B30.2/SPRY domain. Residue Asn-314 is glycosylated (N-linked (GlcNAc...) asparagine). The segment at 527–562 (CSLCCDEVADTQLKPCGHSDLCMDCALQLETCPLCR) adopts an RING-type zinc-finger fold.

It is found in the secreted. This chain is RING finger and SPRY domain-containing protein 1 (RSPRY1), found in Homo sapiens (Human).